A 158-amino-acid chain; its full sequence is Transcription elongation factor GreA (158 aa).

It belongs to the GreA/GreB family.

Functionally, necessary for efficient RNA polymerase transcription elongation past template-encoded arresting sites. The arresting sites in DNA have the property of trapping a certain fraction of elongating RNA polymerases that pass through, resulting in locked ternary complexes. Cleavage of the nascent transcript by cleavage factors such as GreA or GreB allows the resumption of elongation from the new 3'terminus. GreA releases sequences of 2 to 3 nucleotides. This chain is Transcription elongation factor GreA, found in Baumannia cicadellinicola subsp. Homalodisca coagulata.